We begin with the raw amino-acid sequence, 54 residues long: UPF0235 protein in proC 3'region (54 aa).

This sequence belongs to the UPF0235 family.

The sequence is that of UPF0235 protein in proC 3'region from Vibrio alginolyticus.